The chain runs to 644 residues: Fructose-1,6-bisphosphatase class 3 (644 aa).

It belongs to the FBPase class 3 family. Mn(2+) is required as a cofactor.

The catalysed reaction is beta-D-fructose 1,6-bisphosphate + H2O = beta-D-fructose 6-phosphate + phosphate. The protein operates within carbohydrate biosynthesis; gluconeogenesis. This chain is Fructose-1,6-bisphosphatase class 3, found in Oceanobacillus iheyensis (strain DSM 14371 / CIP 107618 / JCM 11309 / KCTC 3954 / HTE831).